A 522-amino-acid polypeptide reads, in one-letter code: Cytochrome P450 monooxygenase sirB (522 aa).

Residues 22–42 form a helical membrane-spanning segment; the sequence is ASAILFCTLLTVFLFISQGTV. N191 carries N-linked (GlcNAc...) asparagine glycosylation. A helical membrane pass occupies residues 304–324; sequence VLHLSFAATGTVAILITHMIY. C462 lines the heme pocket.

This sequence belongs to the cytochrome P450 family. Heme serves as cofactor.

Its subcellular location is the membrane. Its pathway is mycotoxin biosynthesis. Functionally, cytochrome P450 monooxygenase; part of the gene cluster that mediates the biosynthesis of sirodesmin PL, an epipolythiodioxopiperazine (ETP) characterized by a disulfide bridged cyclic dipeptide and that acts as a phytotoxin which is involved in the blackleg didease of canola. SirD catalyzes the O-prenylation of L-tyrosine (L-Tyr) in the presence of dimethylallyl diphosphate (DMAPP) to yield 4-O-dimethylallyl-L-Tyr, and therefore represents probably the first pathway-specific enzyme in the biosynthesis of sirodesmin PL. 4-O-dimethylallyl-L-Tyr, then undergoes condensation with L-Ser in a reaction catalyzed by the non-ribosomal peptide synthase sirP to form the diketopiperazine (DKP) backbone. Further bishydroxylation of the DKP performed by the cytochrome P450 monooxygenase sirC leads to the production of the intermediate phomamide. This step is essential to form the reactive thiol group required for toxicity of sirodesmin PL. The next steps of sirodesmin biosynthesis are not well understood yet, but some predictions could be made from intermediate compounds identification. Phomamide is converted into phomalizarine via oxidation, probably by sirT. Further oxidation, methylation (by sirM or sirN) and reduction steps convert phomalizarine to deacetyl sirodesmin. Finally, acetyltransferase sirH probably acetylates deacetyl sirodesmin to produce sirodesmin PL. This chain is Cytochrome P450 monooxygenase sirB, found in Leptosphaeria maculans (Blackleg fungus).